The following is a 294-amino-acid chain: Probable 2-(5''-triphosphoribosyl)-3'-dephosphocoenzyme-A synthase (294 aa).

It belongs to the CitG/MdcB family.

The enzyme catalyses 3'-dephospho-CoA + ATP = 2'-(5''-triphospho-alpha-D-ribosyl)-3'-dephospho-CoA + adenine. The chain is Probable 2-(5''-triphosphoribosyl)-3'-dephosphocoenzyme-A synthase from Streptococcus pyogenes serotype M49 (strain NZ131).